We begin with the raw amino-acid sequence, 374 residues long: Heme A synthase (374 aa).

The interval 1-22 (MSDHIRAASSPSRHGSEHGWQH) is disordered. Helical transmembrane passes span 32-52 (ILVATWMFTLCFMILVMVMLG), 118-138 (RLWGRLIGLVLLLPLIFLAVT), 149-169 (LILIFVLGGLQGAVGWFMVAS), 184-204 (VVHLSFALLLYSALLWTALSV), and 226-246 (LGLVCITIIAGGFVAGIHAGL). His-281 serves as a coordination point for heme. Helical transmembrane passes span 283 to 300 (LLATLTALTALLTGLIGF), 309 to 329 (AVLPLMVAVILQYALGIATLL), and 332 to 352 (VAVPVAVVHQGMAVLLLTAAI). His-340 serves as a coordination point for heme.

Belongs to the COX15/CtaA family. Type 2 subfamily. In terms of assembly, interacts with CtaB. Heme b serves as cofactor.

The protein localises to the cell membrane. It catalyses the reaction Fe(II)-heme o + 2 A + H2O = Fe(II)-heme a + 2 AH2. Its pathway is porphyrin-containing compound metabolism; heme A biosynthesis; heme A from heme O: step 1/1. Its function is as follows. Catalyzes the conversion of heme O to heme A by two successive hydroxylations of the methyl group at C8. The first hydroxylation forms heme I, the second hydroxylation results in an unstable dihydroxymethyl group, which spontaneously dehydrates, resulting in the formyl group of heme A. This is Heme A synthase from Granulibacter bethesdensis (strain ATCC BAA-1260 / CGDNIH1).